A 153-amino-acid chain; its full sequence is Ribosome maturation factor RimP (153 aa).

It belongs to the RimP family.

The protein resides in the cytoplasm. Required for maturation of 30S ribosomal subunits. The chain is Ribosome maturation factor RimP from Burkholderia mallei (strain NCTC 10229).